The chain runs to 519 residues: Cytochrome P450 4A22 (519 aa).

The propeptide occupies M1 to S4. E321 lines the heme pocket. The residue at position 440 (S440) is a Phosphoserine. Position 457 (C457) interacts with heme.

The protein belongs to the cytochrome P450 family.

It is found in the endoplasmic reticulum membrane. Its subcellular location is the microsome membrane. It carries out the reaction an omega-methyl-long-chain fatty acid + reduced [NADPH--hemoprotein reductase] + O2 = an omega-hydroxy-long-chain fatty acid + oxidized [NADPH--hemoprotein reductase] + H2O + H(+). In terms of biological role, catalyzes the omega- and (omega-1)-hydroxylation of various fatty acids such as laurate and palmitate. Shows no activity towards arachidonic acid and prostaglandin A1. Lacks functional activity in the kidney and does not contribute to renal 20-hydroxyeicosatetraenoic acid (20-HETE) biosynthesis. The sequence is that of Cytochrome P450 4A22 (CYP4A22) from Homo sapiens (Human).